The primary structure comprises 130 residues: Small ribosomal subunit protein uS9 (130 aa).

The protein belongs to the universal ribosomal protein uS9 family.

The protein is Small ribosomal subunit protein uS9 of Exiguobacterium sibiricum (strain DSM 17290 / CCUG 55495 / CIP 109462 / JCM 13490 / 255-15).